The primary structure comprises 156 residues: Transcription antitermination protein NusB (156 aa).

Belongs to the NusB family.

Its function is as follows. Involved in transcription antitermination. Required for transcription of ribosomal RNA (rRNA) genes. Binds specifically to the boxA antiterminator sequence of the ribosomal RNA (rrn) operons. The chain is Transcription antitermination protein NusB from Vibrio cholerae serotype O1 (strain ATCC 39541 / Classical Ogawa 395 / O395).